A 1141-amino-acid chain; its full sequence is Translocase of chloroplast 125, chloroplastic (1141 aa).

Disordered regions lie at residues 1-177 (MDAL…ISGY) and 325-431 (GFVE…EANE). Basic and acidic residues-rich tracts occupy residues 57–72 (RVPEDVRSESEVKRDG) and 107–121 (IDGRFQFEDGVREDL). The segment covering 132 to 150 (YDDDDDDEEEEEDGSEEGE) has biased composition (acidic residues). Positions 151–167 (STSSSIINSEYSSSASN) are enriched in low complexity. Positions 328 to 353 (EAEEAESDVFTEGEDGYDDEDEDGDI) are enriched in acidic residues. 2 stretches are compositionally biased toward low complexity: residues 389 to 401 (RSSARRSAATTAT) and 408 to 429 (TASSTQSAATSDASISSESSEA). The AIG1-type G domain maps to 505–734 (DFACTILVLG…KLQEASTPGK (230 aa)). The tract at residues 514 to 521 (GKTGVGKS) is G1. Residue 517–522 (GVGKSA) participates in GTP binding. Residue Ser-521 participates in Mg(2+) binding. Residues 541-545 (STTKV) are G2. Residues 561–564 (DTPG) are G3. The segment at 633-636 (THAS) is G4. Residues His-634 and 682–683 (EN) each bind GTP. The segment at 682–684 (ENH) is G5. Disordered stretches follow at residues 758–795 (QLKMPDEQHGESEDSDDDSDEEDEEEGDEYDDLPPFRP) and 832–871 (IRRRRERKKQASVMSKEEPSIPGDGAEDESGQPATVAVPM). The segment covering 770–789 (EDSDDDSDEEDEEEGDEYDD) has biased composition (acidic residues). The segment covering 832–841 (IRRRRERKKQ) has biased composition (basic residues). The chain crosses the membrane as a helical span at residues 1116 to 1136 (MVLIGIVPILRSLINCRFGFG).

This sequence belongs to the TRAFAC class TrmE-Era-EngA-EngB-Septin-like GTPase superfamily. AIG1/Toc34/Toc159-like paraseptin GTPase family. TOC159 subfamily. As to quaternary structure, part of the TOC core complex. Mg(2+) is required as a cofactor.

It is found in the plastid. The protein resides in the chloroplast outer membrane. Its function is as follows. GTPase involved in protein precursor import into chloroplasts. Seems to recognize chloroplast-destined precursor proteins and regulate their presentation to the translocation channel through GTP hydrolysis. Probably specialized in the import of nuclear encoded non-photosynthetic preproteins from the cytoplasm to the chloroplast. This Physcomitrium patens (Spreading-leaved earth moss) protein is Translocase of chloroplast 125, chloroplastic.